Reading from the N-terminus, the 156-residue chain is Ribosome maturation factor RimP (156 aa).

Belongs to the RimP family.

Its subcellular location is the cytoplasm. Its function is as follows. Required for maturation of 30S ribosomal subunits. The sequence is that of Ribosome maturation factor RimP from Prochlorococcus marinus (strain NATL1A).